The sequence spans 147 residues: Transcriptional repressor NrdR (147 aa).

The segment at 3 to 34 (CPFCGHEDTQVAETRESDEGDVIRRRRRCPSC) is a zinc-finger region. The ATP-cone domain maps to 49 to 139 (PAIVKKDGSR…VYRSFEGVDE (91 aa)).

This sequence belongs to the NrdR family. The cofactor is Zn(2+).

Functionally, negatively regulates transcription of bacterial ribonucleotide reductase nrd genes and operons by binding to NrdR-boxes. The chain is Transcriptional repressor NrdR from Methylibium petroleiphilum (strain ATCC BAA-1232 / LMG 22953 / PM1).